The primary structure comprises 869 residues: Kinesin-like protein KIN-10A (869 aa).

The segment covering 1 to 36 has biased composition (polar residues); that stretch reads MAPTPSSSRSNQTQYTLIRTPQTKQRLNFHSKTPNP. The interval 1–50 is disordered; the sequence is MAPTPSSSRSNQTQYTLIRTPQTKQRLNFHSKTPNPDGSKDPSPPEHPVE. A compositionally biased stretch (basic and acidic residues) spans 38 to 50; sequence GSKDPSPPEHPVE. Positions 48–367 constitute a Kinesin motor domain; sequence PVEVIGRIRD…LEYGAKAKCI (320 aa). 129–136 contacts ATP; sequence GPTGAGKS. Residues 393–515 are a coiled coil; that stretch reads RIAAMDEFII…EIEVEFRRSN (123 aa).

This sequence belongs to the TRAFAC class myosin-kinesin ATPase superfamily. Kinesin family. KIN-10 subfamily. In terms of assembly, binds microtubules.

Its subcellular location is the cytoplasm. It localises to the cytoskeleton. The protein resides in the phragmoplast. In terms of biological role, probable plus end-directed motor protein that may contribute to the transport of Golgi-derived vesicles in the phragmoplast. In Arabidopsis thaliana (Mouse-ear cress), this protein is Kinesin-like protein KIN-10A.